The sequence spans 336 residues: UPF0065 protein in tcbD-tcbE intergenic region (336 aa).

The N-terminal stretch at 1-32 (MHSSKCPDLANIGRRRVLAGIALAMTTSSTRA) is a signal peptide.

The protein belongs to the UPF0065 (bug) family.

It localises to the periplasm. The polypeptide is UPF0065 protein in tcbD-tcbE intergenic region (Pseudomonas sp. (strain P51)).